The primary structure comprises 284 residues: Bifunctional protein FolD (284 aa).

Residues 166-168 (GAS) and I232 each bind NADP(+).

It belongs to the tetrahydrofolate dehydrogenase/cyclohydrolase family. As to quaternary structure, homodimer.

The enzyme catalyses (6R)-5,10-methylene-5,6,7,8-tetrahydrofolate + NADP(+) = (6R)-5,10-methenyltetrahydrofolate + NADPH. The catalysed reaction is (6R)-5,10-methenyltetrahydrofolate + H2O = (6R)-10-formyltetrahydrofolate + H(+). The protein operates within one-carbon metabolism; tetrahydrofolate interconversion. Catalyzes the oxidation of 5,10-methylenetetrahydrofolate to 5,10-methenyltetrahydrofolate and then the hydrolysis of 5,10-methenyltetrahydrofolate to 10-formyltetrahydrofolate. This chain is Bifunctional protein FolD, found in Shewanella sediminis (strain HAW-EB3).